Consider the following 381-residue polypeptide: MIISEMQRKLATWAATDPSLRIQRLLRLITQPEWLAEAARITLSSKGAHTPGVDGVNKTMLQARLAVELQILRDELLSGHYQPLPARRVYIPKSNGKLRPLGIPALRDRIVQRAMLMAMEPIWESDFHTLSYGFRPERSVHHAIRTVKLQLTDCGETRGRWVIEGDLSSYFDTVHHRLLMKAVRRRISDARFMTLLWKTIKAGHIDVGLFRAASEGVPQGGVISPLLSNIMLNEFDQYLHERYLSGKARKDRWYWNNSIQRGRSTAVRENWQWKPAVAYCRYADDFVLIVKGTKAQVEAIREECRGVLEGSLKLRLNMDKTKIPHVNDGFIFLGHRLIRKRSRYGEMRVVSTIPQEKARNFAASLTALLWKVRISGEILLG.

A Reverse transcriptase domain is found at 72–337 (LRDELLSGHY…DGFIFLGHRL (266 aa)). Positions 166, 284, and 285 each coordinate Mg(2+).

It belongs to the bacterial reverse transcriptase family.

The chain is Protein YkfC (ykfC) from Escherichia coli (strain K12).